The chain runs to 61 residues: Large ribosomal subunit protein bL32 (61 aa).

Positions 1–18 (MAIVPKRKTSKQRKRKRQ) are enriched in basic residues. The disordered stretch occupies residues 1–20 (MAIVPKRKTSKQRKRKRQTH).

It belongs to the bacterial ribosomal protein bL32 family.

This is Large ribosomal subunit protein bL32 (rpmF) from Mycoplasmopsis pulmonis (strain UAB CTIP) (Mycoplasma pulmonis).